The sequence spans 54 residues: FATVDCSEYPKPVCSPEYMPLCGSDSKTYNNKCDFCSAVVESNGTLTLGHFGKC.

The Kazal-like domain occupies 4–54 (VDCSEYPKPVCSPEYMPLCGSDSKTYNNKCDFCSAVVESNGTLTLGHFGKC). Intrachain disulfides connect C6/C36, C14/C33, and C22/C54. Residue N43 is glycosylated (N-linked (GlcNAc...) asparagine).

The protein resides in the secreted. This is Ovomucoid from Casuarius casuarius (Southern cassowary).